The chain runs to 113 residues: uncharacterized protein (113 aa).

An N-terminal signal peptide occupies residues 1-19 (MLSPLSPRIIAAFTTAVGA).

This sequence to M.tuberculosis Rv1291c.

This is an uncharacterized protein from Mycobacterium tuberculosis (strain CDC 1551 / Oshkosh).